The following is a 177-amino-acid chain: Phosphatidylglycerol/phosphatidylinositol transfer protein (177 aa).

Residues 1–17 form the signal peptide; that stretch reads MRLSAAVIALLSTSAAA. The propeptide occupies 18 to 30; the sequence is FSVYRENSVSAND.

Belongs to the NPC2 family. As to quaternary structure, monomer.

In terms of biological role, catalyzes the intermembrane transfer of phosphatidylglycerol and phosphatidylinositol. In Neurospora crassa (strain ATCC 24698 / 74-OR23-1A / CBS 708.71 / DSM 1257 / FGSC 987), this protein is Phosphatidylglycerol/phosphatidylinositol transfer protein (npc-2).